The chain runs to 327 residues: GTPase Obg (327 aa).

One can recognise an Obg domain in the interval 1 to 159; the sequence is MQFIDQANII…WEVQLELKLL (159 aa). One can recognise an OBG-type G domain in the interval 160 to 327; sequence AEVGIIGLPN…SLLFEVWKRI (168 aa). Residues 166–173, 191–195, 213–216, 280–283, and 309–311 contribute to the ATP site; these read GLPNAGKS, FTTLI, DIPG, NKME, and SSS. Positions 173 and 193 each coordinate Mg(2+).

It belongs to the TRAFAC class OBG-HflX-like GTPase superfamily. OBG GTPase family. As to quaternary structure, monomer. Mg(2+) is required as a cofactor.

The protein resides in the cytoplasm. Functionally, an essential GTPase which binds GTP, GDP and possibly (p)ppGpp with moderate affinity, with high nucleotide exchange rates and a fairly low GTP hydrolysis rate. Plays a role in control of the cell cycle, stress response, ribosome biogenesis and in those bacteria that undergo differentiation, in morphogenesis control. The protein is GTPase Obg of Prochlorococcus marinus (strain MIT 9312).